The sequence spans 380 residues: Cytochrome b (380 aa).

Helical transmembrane passes span 34 to 54, 78 to 99, 114 to 134, and 179 to 199; these read YGSL…FLAM, WLMR…YLHI, WNIG…GYVL, and FFTF…LHLL. Residues H84 and H98 each coordinate heme b. Residues H183 and H197 each contribute to the heme b site. H202 contributes to the a ubiquinone binding site. 4 helical membrane-spanning segments follow: residues 227–247, 289–309, 321–341, and 348–368; these read YKDT…STTN, LGGV…PSLH, LSQL…WIGG, and FILI…VLLP.

The protein belongs to the cytochrome b family. In terms of assembly, the cytochrome bc1 complex contains 3 respiratory subunits (MT-CYB, CYC1 and UQCRFS1), 2 core proteins (UQCRC1 and UQCRC2) and probably 6 low-molecular weight proteins. Requires heme b as cofactor.

Its subcellular location is the mitochondrion inner membrane. Component of the ubiquinol-cytochrome c reductase complex (complex III or cytochrome b-c1 complex) that is part of the mitochondrial respiratory chain. The b-c1 complex mediates electron transfer from ubiquinol to cytochrome c. Contributes to the generation of a proton gradient across the mitochondrial membrane that is then used for ATP synthesis. This chain is Cytochrome b (mt-cyb), found in Typhlonectes natans (Rubber eel).